The sequence spans 497 residues: Lysophospholipid acyltransferase 5 (497 aa).

A run of 6 helical transmembrane segments spans residues 31–51, 74–94, 100–120, 173–193, 213–235, and 264–286; these read LLTI…ISVI, GLDT…VLLL, IFLA…YFYT, LELL…QFPF, AGVR…LRYL, and SLYK…GLTY. Active-site residues include Asn322 and His358. The helical transmembrane segment at 339 to 361 threads the bilayer; that stretch reads FLNNRTISYGAALGFLAVWHGYH. Asn398 carries an N-linked (GlcNAc...) asparagine glycan. The next 2 membrane-spanning stretches (helical) occupy residues 408 to 428 and 435 to 455; these read FITL…AFVF and IVVY…WAAF. Positions 469 to 497 are disordered; it reads KLAGEDQKLQDSNTDKLVEEKKPEDKKSE. The span at 470–497 shows a compositional bias: basic and acidic residues; sequence LAGEDQKLQDSNTDKLVEEKKPEDKKSE. Ser480 carries the phosphoserine modification.

This sequence belongs to the membrane-bound acyltransferase family. During gastrulation, expressed mainly along the midline in the presumptive mesoderm. During germ band elongation, expressed in mesoderm and endoderm primordia and in the cephalic furrow. Expression in mesoderm and endoderm lineages continues during germ band shortening. At the end of this process, no longer detected in somatic mesoderm or endoderm layer with expression restricted to anterior and posterior domains of the visceral mesoderm.

The protein localises to the endoplasmic reticulum. The protein resides in the membrane. It carries out the reaction a 1-acyl-sn-glycero-3-phospho-L-serine + an acyl-CoA = a 1,2-diacyl-sn-glycero-3-phospho-L-serine + CoA. The catalysed reaction is 1-(9Z-octadecenoyl)-sn-glycero-3-phospho-L-serine + (9Z)-hexadecenoyl-CoA = 1-(9Z-octadecenoyl)-2-(9Z-hexadecenoyl)-sn-glycero-3-phospho-L-serine + CoA. It catalyses the reaction a 1-acyl-sn-glycero-3-phosphocholine + an acyl-CoA = a 1,2-diacyl-sn-glycero-3-phosphocholine + CoA. The enzyme catalyses 1-hexadecanoyl-sn-glycero-3-phosphocholine + (9Z)-octadecenoyl-CoA = 1-hexadecanoyl-2-(9Z-octadecenoyl)-sn-glycero-3-phosphocholine + CoA. It carries out the reaction (9Z,12Z)-octadecadienoyl-CoA + 1-hexadecanoyl-sn-glycero-3-phosphocholine = 1-hexadecanoyl-2-(9Z,12Z-octadecadienoyl)-sn-glycero-3-phosphocholine + CoA. The catalysed reaction is (5Z,8Z,11Z,14Z)-eicosatetraenoyl-CoA + 1-hexadecanoyl-sn-glycero-3-phosphocholine = 1-hexadecanoyl-2-(5Z,8Z,11Z,14Z-eicosatetraenoyl)-sn-glycero-3-phosphocholine + CoA. It catalyses the reaction (9Z)-hexadecenoyl-CoA + 1-hexadecanoyl-sn-glycero-3-phosphocholine = 1-hexadecanoyl-2-(9Z-hexadecenoyl)-sn-glycero-3-phosphocholine + CoA. The protein operates within lipid metabolism; phospholipid metabolism. Its function is as follows. Acyltransferase that mediates the acylation of lysophospholipids to produce phospholipids (glycerophospholipids). Highest activity with lysophosphatidylcholine (1-acyl-sn-glycero-3-phosphocholine or LPC) producing phosphatidylcholine (1,2-diacyl-sn-glycero-3-phosphocholine or PC) (LPCAT activity), but also converts lysophosphatidylserine (1-acyl-2-hydroxy-sn-glycero-3-phospho-L-serine or LPS) to phosphatidylserine (1,2-diacyl-sn-glycero-3-phospho-L-serine or PS) (LPSAT activity). Has a preference for unsaturated fatty acids of at least 16 carbons such as oleoyl-CoA ((9Z)-octadecenoyl-CoA) and palmitoleoyl-CoA ((9Z)-hexadecenoyl-CoA). Glycerophospholipids are important structural and functional components of cellular membrane, acyl-chain remodeling regulates the molecular species distribution of glycerophospholipids which can affect membrane fluidity and curvature. Essential for fertility and viability together with Oysgedart (Oys). Required for germ cells to migrate into the mesoderm. This chain is Lysophospholipid acyltransferase 5, found in Drosophila melanogaster (Fruit fly).